The following is a 325-amino-acid chain: Probable flavonol synthase 5 (325 aa).

Residues 1–21 are disordered; sequence MEEERDHNASESSLPSLSKQL. Polar residues predominate over residues 10–21; the sequence is SESSLPSLSKQL. Residues 180–280 enclose the Fe2OG dioxygenase domain; the sequence is TAEYVLRVNF…RISWPVFVAP (101 aa). Residue 188-190 coordinates 2-oxoglutarate; it reads NFY. Residues histidine 205, aspartate 207, and histidine 261 each coordinate Fe cation. A 2-oxoglutarate-binding site is contributed by 271–273; sequence RIS.

It belongs to the iron/ascorbate-dependent oxidoreductase family. Fe(2+) is required as a cofactor. In terms of tissue distribution, expressed in young seedlings.

It carries out the reaction a (2R,3R)-dihydroflavonol + 2-oxoglutarate + O2 = a flavonol + succinate + CO2 + H2O. The protein operates within secondary metabolite biosynthesis; flavonoid biosynthesis. In Arabidopsis thaliana (Mouse-ear cress), this protein is Probable flavonol synthase 5 (FLS5).